Consider the following 315-residue polypeptide: Putative steroid dehydrogenase 3 (315 aa).

NADP(+) is bound at residue 47–76; sequence ASWAVITGGTDGIGKSFSFELAKRGFNIYI. Residue Y202 is part of the active site.

This sequence belongs to the short-chain dehydrogenases/reductases (SDR) family. 17-beta-HSD 3 subfamily.

In Caenorhabditis elegans, this protein is Putative steroid dehydrogenase 3 (stdh-3).